The sequence spans 299 residues: Taste receptor type 2 member 5 (299 aa).

Position 1 (methionine 1) is a topological domain, extracellular. A helical transmembrane segment spans residues 2–22 (LSAGLGLLMLVAVVEFLIGLI). Residues 23-45 (GNGVLVVWSFREWMRKFNWSSYN) are Cytoplasmic-facing. The helical transmembrane segment at 46–66 (LIILGLAGCRFLLQWLIILDL) threads the bilayer. Residues 67-82 (SLFPLFQSSRWLRYLS) are Extracellular-facing. Residues 83 to 103 (IFWVLVSQASLWFATFLSVFY) form a helical membrane-spanning segment. Topologically, residues 104–127 (CKKITTFDRPAYLWLKQRAYNLSL) are cytoplasmic. The chain crosses the membrane as a helical span at residues 128–148 (WCLLGYFIINLLLTVQIGLMF). The Extracellular segment spans residues 149 to 175 (YHPPQGNSSIRYPFESWQYLYAFRLNS). Asparagine 155 carries an N-linked (GlcNAc...) asparagine glycan. Residues 176–196 (GSYLPLMVFLVSSGMLIVSLY) form a helical membrane-spanning segment. The Cytoplasmic portion of the chain corresponds to 197 to 223 (THHKKMKVHSAGRRDVRAKAHITALKS). The helical transmembrane segment at 224 to 244 (LGCFLFLHLVYIMASPFSITS) threads the bilayer. The Extracellular segment spans residues 245 to 253 (KTYPPDLTS). The chain crosses the membrane as a helical span at residues 254-274 (VFIWETLMAAYPSLHSLILIM). Residues 275–299 (GIPRVKQTCQKILWKTVCARRCWGP) lie on the Cytoplasmic side of the membrane.

The protein belongs to the G-protein coupled receptor T2R family.

The protein resides in the membrane. Its function is as follows. Receptor that may play a role in the perception of bitterness and is gustducin-linked. May play a role in sensing the chemical composition of the gastrointestinal content. The activity of this receptor may stimulate alpha gustducin, mediate PLC-beta-2 activation and lead to the gating of TRPM5. The sequence is that of Taste receptor type 2 member 5 (TAS2R5) from Gorilla gorilla gorilla (Western lowland gorilla).